A 90-amino-acid chain; its full sequence is uncharacterized protein (90 aa).

Residues 69-89 form a helical membrane-spanning segment; that stretch reads LLYIFLGAMIVIIFLVIKNQL.

The protein belongs to the IIV-6 466R family.

Its subcellular location is the membrane. This is an uncharacterized protein from Invertebrate iridescent virus 6 (IIV-6).